A 315-amino-acid chain; its full sequence is Cobalamin biosynthesis protein CobD (315 aa).

The next 7 membrane-spanning stretches (helical) occupy residues 1-21 (MLDI…YWFP), 50-70 (VFGG…PFII), 79-99 (VIYH…KSLH), 151-171 (DGII…AMMY), 209-229 (VTGI…FYSI), 250-270 (AAAA…GEVV), and 291-311 (IILM…IICF).

It belongs to the CobD/CbiB family.

The protein localises to the cell membrane. It functions in the pathway cofactor biosynthesis; adenosylcobalamin biosynthesis. Its function is as follows. Converts cobyric acid to cobinamide by the addition of aminopropanol on the F carboxylic group. This is Cobalamin biosynthesis protein CobD from Clostridium acetobutylicum (strain ATCC 824 / DSM 792 / JCM 1419 / IAM 19013 / LMG 5710 / NBRC 13948 / NRRL B-527 / VKM B-1787 / 2291 / W).